Here is a 316-residue protein sequence, read N- to C-terminus: L-lactate dehydrogenase (316 aa).

NAD(+) is bound by residues Val-15, Asp-37, Lys-42, Tyr-68, and 82–83 (GL). Residues Gln-85, Arg-91, and 123 to 126 (NPVD) contribute to the substrate site. NAD(+) contacts are provided by residues 121–123 (ASN) and Thr-146. 151-154 (DTSR) contributes to the substrate binding site. 2 residues coordinate beta-D-fructose 1,6-bisphosphate: Arg-156 and His-171. His-178 serves as the catalytic Proton acceptor. Tyr-222 is modified (phosphotyrosine). Thr-231 is a binding site for substrate.

The protein belongs to the LDH/MDH superfamily. LDH family. Homotetramer.

It localises to the cytoplasm. The catalysed reaction is (S)-lactate + NAD(+) = pyruvate + NADH + H(+). The protein operates within fermentation; pyruvate fermentation to lactate; (S)-lactate from pyruvate: step 1/1. Allosterically activated by fructose 1,6-bisphosphate (FBP). Catalyzes the conversion of lactate to pyruvate. The sequence is that of L-lactate dehydrogenase from Borrelia garinii subsp. bavariensis (strain ATCC BAA-2496 / DSM 23469 / PBi) (Borreliella bavariensis).